The following is a 401-amino-acid chain: Probable tRNA sulfurtransferase (401 aa).

Residues 60-165 (EPIIDKLKNV…QEGTYITCHD (106 aa)) enclose the THUMP domain. ATP is bound by residues 183 to 184 (ML), 208 to 209 (HF), arginine 265, glycine 287, and glutamine 296.

This sequence belongs to the ThiI family.

Its subcellular location is the cytoplasm. The catalysed reaction is [ThiI sulfur-carrier protein]-S-sulfanyl-L-cysteine + a uridine in tRNA + 2 reduced [2Fe-2S]-[ferredoxin] + ATP + H(+) = [ThiI sulfur-carrier protein]-L-cysteine + a 4-thiouridine in tRNA + 2 oxidized [2Fe-2S]-[ferredoxin] + AMP + diphosphate. The enzyme catalyses [ThiS sulfur-carrier protein]-C-terminal Gly-Gly-AMP + S-sulfanyl-L-cysteinyl-[cysteine desulfurase] + AH2 = [ThiS sulfur-carrier protein]-C-terminal-Gly-aminoethanethioate + L-cysteinyl-[cysteine desulfurase] + A + AMP + 2 H(+). The protein operates within cofactor biosynthesis; thiamine diphosphate biosynthesis. Its function is as follows. Catalyzes the ATP-dependent transfer of a sulfur to tRNA to produce 4-thiouridine in position 8 of tRNAs, which functions as a near-UV photosensor. Also catalyzes the transfer of sulfur to the sulfur carrier protein ThiS, forming ThiS-thiocarboxylate. This is a step in the synthesis of thiazole, in the thiamine biosynthesis pathway. The sulfur is donated as persulfide by IscS. In Geobacillus sp. (strain WCH70), this protein is Probable tRNA sulfurtransferase.